Reading from the N-terminus, the 4543-residue chain is Low-density lipoprotein receptor-related protein 1 (4543 aa).

The N-terminal stretch at 1–21 (MGPLLALAGCLLALLAAPAAR) is a signal peptide. Residues 22 to 4419 (ALEAPKTCSP…EFIVGEQQSG (4398 aa)) lie on the Extracellular side of the membrane. LDL-receptor class A domains follow at residues 27 to 68 (KTCS…ICPQ) and 72 to 112 (SRCQ…HCRE). Cystine bridges form between Cys-29–Cys-42, Cys-36–Cys-55, Cys-49–Cys-66, Cys-74–Cys-87, Cys-81–Cys-100, and Cys-94–Cys-110. In terms of domain architecture, EGF-like 1 spans 113–151 (QLANCTALGCQHHCVPTLSGPACYCNNSFQLAEDRRSCK). A glycan (N-linked (GlcNAc...) asparagine) is linked at Asn-116. Cystine bridges form between Cys-117/Cys-126, Cys-122/Cys-135, Cys-137/Cys-150, Cys-156/Cys-166, Cys-162/Cys-175, and Cys-177/Cys-190. N-linked (GlcNAc...) asparagine glycosylation occurs at Asn-138. The region spanning 152-191 (DFDECTVYGTCSQTCTNTEGSYTCSCVEGYLLQPDNRSCK) is the EGF-like 2; calcium-binding domain. 2 N-linked (GlcNAc...) asparagine glycosylation sites follow: Asn-187 and Asn-276. 3 LDL-receptor class B repeats span residues 294-336 (GNFY…DPAM), 337-380 (GKVF…DLVS), and 381-424 (RLVY…FENY). An N-linked (GlcNAc...) asparagine glycan is attached at Asn-359. Asn-448 carries an N-linked (GlcNAc...) asparagine glycan. The EGF-like 3 domain occupies 476–522 (RSHACEPDQFGKPGGCSDICLLGNSHKSRTCRCRSGFSLGSDGKSCK). 3 disulfides stabilise this stretch: Cys-480–Cys-495, Cys-491–Cys-506, and Cys-508–Cys-521. LDL-receptor class B repeat units lie at residues 573–615 (GFIY…DWMG), 616–661 (NNLY…DPLN), 662–712 (GWMY…DIPA), and 713–756 (KILY…YSSF). A glycan (N-linked (GlcNAc...) asparagine) is linked at Asn-731. The EGF-like 4 domain occupies 801–841 (GSNKCRVNNGGCSSLCLATPRGRQCACAEDQILGADSVTCE). Cystine bridges form between Cys-805-Cys-816, Cys-812-Cys-825, Cys-827-Cys-840, Cys-852-Cys-864, Cys-859-Cys-877, Cys-871-Cys-888, Cys-893-Cys-905, Cys-900-Cys-918, Cys-912-Cys-929, Cys-934-Cys-946, Cys-941-Cys-959, Cys-953-Cys-969, Cys-974-Cys-987, Cys-982-Cys-1000, Cys-994-Cys-1009, Cys-1013-Cys-1025, Cys-1020-Cys-1038, Cys-1032-Cys-1049, Cys-1060-Cys-1073, Cys-1067-Cys-1086, Cys-1080-Cys-1095, Cys-1102-Cys-1116, Cys-1110-Cys-1129, Cys-1123-Cys-1138, Cys-1143-Cys-1157, Cys-1150-Cys-1170, Cys-1164-Cys-1180, Cys-1183-Cys-1194, Cys-1190-Cys-1204, Cys-1206-Cys-1219, Cys-1225-Cys-1235, Cys-1231-Cys-1244, and Cys-1246-Cys-1259. LDL-receptor class A domains are found at residues 850-890 (PQCQ…LCHQ), 891-931 (HTCP…TCSA), 932-971 (RTCSPNQFSCASGRCIPISWTCDLDDDCGDRSDESASCAY), 972-1011 (PTCFPLTQFTCNNGRCININWRCDNDNDCGDNSDEAGCSH), 1011-1051 (HSCS…NCTN), 1058-1097 (GGCHTDEFQCRLDGLCIPMRWRCDGDTDCMDSSDEKNCEG), 1100-1140 (HVCD…NCES), and 1141-1180 (LVCKPPSHTCANNTSICLPPEKLCDGSDDCGDGSDEGELC). Residues Trp-869, Asp-872, Asp-874, Asp-876, Asp-882, and Glu-883 each contribute to the Ca(2+) site. Asn-926 carries an N-linked (GlcNAc...) asparagine glycan. The Ca(2+) site is built by Trp-1030, Asp-1033, Asp-1035, Asp-1037, Asp-1043, and Glu-1044. An N-linked (GlcNAc...) asparagine glycan is attached at Asn-1048. Residues Trp-1078, Asp-1081, Asp-1083, Asp-1085, Asp-1091, and Glu-1092 each contribute to the Ca(2+) site. Asn-1152 and Asn-1153 each carry an N-linked (GlcNAc...) asparagine glycan. EGF-like domains are found at residues 1181-1220 (DQCSLNNGGCSHNCTVAPGEGIVCSCPLGMELGADNKTCQ) and 1221-1260 (IQSYCAKHLKCSQKCEQDKYNVKCSCYEGWMLEPDGESCR). N-linked (GlcNAc...) asparagine glycosylation is found at Asn-1193 and Asn-1216. Asn-1305 carries an N-linked (GlcNAc...) asparagine glycan. LDL-receptor class B repeat units lie at residues 1307 to 1353 (SSLY…DWIA), 1354 to 1396 (GNIY…DPRY), 1397 to 1443 (GILF…DYLE), 1444 to 1488 (KRIL…YGGE), and 1489 to 1529 (VYWT…YHPS). N-linked (GlcNAc...) asparagine glycosylation is present at Asn-1509. One can recognise an EGF-like 7 domain in the interval 1534 to 1577 (APNPCEANGGKGPCSHLCLINYNRTLSCACPHLMKLDKDNTTCY). 3 disulfides stabilise this stretch: Cys-1538/Cys-1551, Cys-1547/Cys-1561, and Cys-1563/Cys-1576. Residues Asn-1556, Asn-1573, Asn-1614, and Asn-1643 are each glycosylated (N-linked (GlcNAc...) asparagine). LDL-receptor class B repeat units follow at residues 1625 to 1667 (QRIY…DWVS), 1668 to 1711 (RNLF…HPLH), 1712 to 1751 (GKLYWTDGDNISVANMDGSNRTLLFTNQRGPVGLAIDYPE), and 1752 to 1796 (SKLY…MGDK). N-linked (GlcNAc...) asparagine glycans are attached at residues Asn-1721, Asn-1731, Asn-1761, and Asn-1823. One can recognise an EGF-like 8 domain in the interval 1842-1883 (GSNPCSVNNGDCSQLCLPTSETSRSCMCTAGYSLKSGQQSCE). 3 disulfide bridges follow: Cys-1846–Cys-1857, Cys-1853–Cys-1867, and Cys-1869–Cys-1882. An N-linked (GlcNAc...) asparagine glycan is attached at Asn-1929. LDL-receptor class B repeat units lie at residues 1930–1972 (DTIY…DWIA), 1973–2015 (GNIY…HPEK), 2016–2059 (GYLF…DYED), and 2060–2103 (GKLY…FEDY). 2 N-linked (GlcNAc...) asparagine glycosylation sites follow: Asn-1991 and Asn-2044. Residues Asn-2113 and Asn-2123 are each glycosylated (N-linked (GlcNAc...) asparagine). The 41-residue stretch at 2151–2191 (GTNVCAQNNGGCQQLCLFRGGGRRTCACAHGMLSEDGVSCR) folds into the EGF-like 9 domain. 3 disulfides stabilise this stretch: Cys-2155–Cys-2166, Cys-2162–Cys-2176, and Cys-2178–Cys-2190. LDL-receptor class B repeat units lie at residues 2247 to 2288 (NRIF…HRGW), 2289 to 2337 (DTLY…DECQ), 2338 to 2382 (NLMF…DHRA), 2383 to 2425 (EKIY…YGDY), and 2426 to 2467 (IFWT…VAND). Asn-2466 carries N-linked (GlcNAc...) asparagine glycosylation. In terms of domain architecture, EGF-like 10 spans 2472–2512 (ELSPCRVNNGGCQDLCLLTPKGHVNCSCRGERVLQEDFTCK). 3 cysteine pairs are disulfide-bonded: Cys-2476–Cys-2487, Cys-2483–Cys-2497, and Cys-2499–Cys-2511. N-linked (GlcNAc...) asparagine glycosylation occurs at Asn-2496. A glycan (N-linked (GlcNAc...) asparagine) is linked at Asn-2515. 7 LDL-receptor class A domains span residues 2516 to 2557 (STCN…YCSS), 2558 to 2596 (RKCKKGFLHCMNGRCVASRFWCNGVDDCGDNSDEVPCNK), 2597 to 2635 (TSCAATEFRCRDGSCIGNSSRCNQFIDCEDASDEMNCTA), 2636 to 2684 (TDCS…NCPG), 2688 to 2730 (PKCP…RQDK), 2730 to 2769 (KFCYPVQFECNNHRCISKLWVCDGADDCGDGSDEDSRCRL), and 2770 to 2812 (TTCS…GCLY). Intrachain disulfides connect Cys-2518–Cys-2531, Cys-2526–Cys-2544, Cys-2538–Cys-2555, Cys-2560–Cys-2572, Cys-2567–Cys-2585, and Cys-2579–Cys-2594. N-linked (GlcNAc...) asparagine glycosylation occurs at Asn-2595. 15 disulfide bridges follow: Cys-2599/Cys-2611, Cys-2606/Cys-2624, Cys-2618/Cys-2633, Cys-2638/Cys-2660, Cys-2654/Cys-2673, Cys-2667/Cys-2682, Cys-2690/Cys-2702, Cys-2697/Cys-2715, Cys-2709/Cys-2724, Cys-2732/Cys-2744, Cys-2739/Cys-2757, Cys-2751/Cys-2767, Cys-2772/Cys-2785, Cys-2779/Cys-2798, and Cys-2792/Cys-2810. N-linked (GlcNAc...) asparagine glycans are attached at residues Asn-2614 and Asn-2632. The N-linked (GlcNAc...) asparagine glycan is linked to Asn-2813. LDL-receptor class A domains lie at 2814–2853 (NTCDEREFMCGNRQCIPKHFVCDHDDDCGDGSDESPECEY), 2854–2897 (PTCG…RCSS), and 2900–2938 (SKCNDSFFMCKNGKCIPEALLCDNNNDCADGSDELNCFI). 15 disulfides stabilise this stretch: Cys-2816–Cys-2828, Cys-2823–Cys-2841, Cys-2835–Cys-2851, Cys-2856–Cys-2868, Cys-2863–Cys-2882, Cys-2876–Cys-2895, Cys-2902–Cys-2914, Cys-2909–Cys-2927, Cys-2921–Cys-2936, Cys-2941–Cys-2953, Cys-2949–Cys-2962, Cys-2964–Cys-2977, Cys-2983–Cys-2993, Cys-2989–Cys-3002, and Cys-3004–Cys-3018. Residue Asn-2903 is glycosylated (N-linked (GlcNAc...) asparagine). One can recognise an EGF-like 11 domain in the interval 2939–2978 (NECLNKKLSGCSQECEDLKIGYKCRCRPGFRLKDDGKTCI). The 41-residue stretch at 2979–3019 (DIDECSTTYPCSQKCINTLGSYKCLCIEGYKLKPDNPTSCK) folds into the EGF-like 12; calcium-binding domain. N-linked (GlcNAc...) asparagine glycosylation is found at Asn-3045 and Asn-3086. LDL-receptor class B repeat units follow at residues 3066-3110 (QMIY…DWVG), 3111-3153 (GNLY…DVQN), 3154-3197 (GYLY…DYIN), 3198-3240 (SRIY…FEDY), and 3241-3281 (IYWT…YHPY). The N-linked (GlcNAc...) asparagine glycan is linked to Asn-3176. N-linked (GlcNAc...) asparagine glycosylation is present at Asn-3261. Residues 3287 to 3328 (PNHPCKTNNAGCSNLCLLSPGGGHKCACPTNFYLGSDGKTCV) form the EGF-like 13 domain. 3 disulfide bridges follow: Cys-3291–Cys-3302, Cys-3298–Cys-3312, and Cys-3314–Cys-3327. 11 consecutive LDL-receptor class A domains span residues 3329 to 3368 (SNCTASQFVCKNDKCIPFWWKCDTEDDCGDRSDEPEDCPE), 3369 to 3407 (FKCRPGQFQCSTGICTNPAFICDGDNDCQDNSDEANCDI), 3408 to 3447 (HVCLPSQFKCTNTNRCIPGIFRCNGQDNCGDGEDEKDCPE), 3448 to 3488 (VTCA…NCTQ), 3489 to 3530 (MTCG…ECDE), 3531 to 3569 (RTCEPYQFRCKNNRCVPGRWQCDYDNDCGDNSDEESCTP), 3570 to 3608 (RPCSESEFSCANGRCIAGRWKCDGDHDCADGSDEKDCIP), 3608 to 3646 (PRCEFDQYQCKNGHCIPMRWRCDADADCMDGTDEEDCGT), 3649 to 3689 (RTCP…ECLK), 3690 to 3730 (FQCP…DCES), and 3736 to 3776 (KSCS…SCSH). The N-linked (GlcNAc...) asparagine glycan is linked to Asn-3330. Intrachain disulfides connect Cys-3331-Cys-3343, Cys-3338-Cys-3356, Cys-3350-Cys-3366, Cys-3371-Cys-3383, Cys-3378-Cys-3396, Cys-3390-Cys-3405, Cys-3410-Cys-3423, Cys-3417-Cys-3436, Cys-3430-Cys-3445, Cys-3450-Cys-3463, Cys-3457-Cys-3476, Cys-3470-Cys-3486, Cys-3491-Cys-3504, Cys-3498-Cys-3517, Cys-3511-Cys-3528, Cys-3533-Cys-3545, Cys-3540-Cys-3558, Cys-3552-Cys-3567, Cys-3572-Cys-3584, Cys-3579-Cys-3597, Cys-3591-Cys-3606, Cys-3610-Cys-3622, Cys-3617-Cys-3635, Cys-3629-Cys-3644, Cys-3658-Cys-3676, Cys-3670-Cys-3687, Cys-3692-Cys-3706, Cys-3700-Cys-3719, Cys-3713-Cys-3728, Cys-3738-Cys-3752, Cys-3747-Cys-3765, Cys-3759-Cys-3774, Cys-3783-Cys-3796, Cys-3790-Cys-3805, Cys-3807-Cys-3820, Cys-3826-Cys-3836, Cys-3832-Cys-3845, and Cys-3847-Cys-3858. Asn-3485 carries an N-linked (GlcNAc...) asparagine glycan. N-linked (GlcNAc...) asparagine glycosylation occurs at Asn-3659. EGF-like domains lie at 3779–3821 (KSYD…NSCQ) and 3822–3859 (DVNECLRFGTCSQLCNNTKGSHVCSCAKNFMKTDNMCK). Residue Asn-3786 is glycosylated (N-linked (GlcNAc...) asparagine). An N-linked (GlcNAc...) asparagine glycan is attached at Asn-3837. LDL-receptor class B repeat units follow at residues 3910–3952 (NKIY…THLN), 3969–4011 (GNIY…DPLR), 4012–4055 (GTMY…DYHN), and 4056–4100 (ERLY…FEDY). The Recognition site for proteolytical processing signature appears at 3939 to 3942 (RNRR). An N-linked (GlcNAc...) asparagine glycan is attached at Asn-3952. Residues Asn-4074 and Asn-4124 are each glycosylated (N-linked (GlcNAc...) asparagine). EGF-like domains lie at 4146 to 4182 (VTNPCDRKKCEWLCLLSPSGPVCTCPNGKRLDNGTCV), 4195 to 4231 (TTDTCDLVCLNGGSCFLNARKQAKCRCQPRYNGERCQ), 4231 to 4267 (QINQCSDYCQNGGLCTASPSGMPTCRCPTGFTGSRCD), 4267 to 4303 (DQQVCTNYCHNNGSCTVNQGNQPNCRCPPTFIGDRCQ), 4303 to 4339 (QYQQCFNYCENNGVCQMSRDGVKQCRCPPQFEGAQCQ), 4339 to 4374 (QDNKCSRCQEGKCNINRQSGDVSCICPDGKIAPSCL), and 4372 to 4409 (SCLTCDSYCLNGGTCSISDKTQLPECLCPLEVTGMRCE). 21 disulfide bridges follow: Cys-4150-Cys-4159, Cys-4155-Cys-4168, Cys-4170-Cys-4181, Cys-4199-Cys-4209, Cys-4203-Cys-4219, Cys-4221-Cys-4230, Cys-4235-Cys-4245, Cys-4239-Cys-4255, Cys-4257-Cys-4266, Cys-4271-Cys-4281, Cys-4275-Cys-4291, Cys-4293-Cys-4302, Cys-4307-Cys-4317, Cys-4311-Cys-4327, Cys-4329-Cys-4338, Cys-4343-Cys-4351, Cys-4346-Cys-4362, Cys-4364-Cys-4373, Cys-4376-Cys-4386, Cys-4380-Cys-4397, and Cys-4399-Cys-4408. N-linked (GlcNAc...) asparagine glycosylation occurs at Asn-4178. N-linked (GlcNAc...) asparagine glycosylation is present at Asn-4278. The chain crosses the membrane as a helical span at residues 4420 to 4443 (RTASIVIPILLLLLLLAVVAFAWY). Residues 4444 to 4543 (KWRIKGAKGF…ADDDLTDPLA (100 aa)) lie on the Cytoplasmic side of the membrane. The NPXY motif signature appears at 4501–4506 (FTNPVY). The segment at 4522–4543 (STDEKRELLARGADDDLTDPLA) is disordered. Residues 4523–4535 (TDEKRELLARGAD) are compositionally biased toward basic and acidic residues.

This sequence belongs to the LDLR family. In terms of assembly, binds vitellogenin and LRPAP1 (alpha 2-macroglobulin). In terms of processing, cleaved into a 85 kDa membrane-spanning subunit (LRP-85) and a 515 kDa large extracellular domain (LRP-515) that remains non-covalently associated. In terms of tissue distribution, somatic.

It localises to the membrane. It is found in the coated pit. Endocytic receptor involved in endocytosis and in phagocytosis of apoptotic cells. Involved in cellular lipid homeostasis. Involved in the plasma clearance of chylomicron remnants and activated LRPAP1 (alpha 2-macroglobulin), as well as the local metabolism of complexes between plasminogen activators and their endogenous inhibitors. Acts as an alpha-2-macroglobulin receptor. The polypeptide is Low-density lipoprotein receptor-related protein 1 (LRP1) (Gallus gallus (Chicken)).